The primary structure comprises 590 residues: MYTEESLDNLRHSIDIVDVLSEHIHLKRSGATYKACCPFHTEKTPSFIVNPAGAHYHCFGCGAHGDAIGFLMQHLGYSFTEAILVLSKKFQVDLVLQPKDSGYTPPQGLKEELRHINSEAETFFRYCLYHLPEARHALQYLYHRGFSPDTIDRFHLGYGPEQSLFLQAMEERKISQEQLHTAGFFGNKWFLFARRIIFPVHDALGHTIGFSARKFLENSQGGKYVNTPETPIFKKSRILFGLNFSRRRIAKEKKVILVEGQADCLQMIDSGFNCTVAAQGTAFTEEHVKELSKLGVLKVFLLFDSDEAGNKAALRVGDLCQTAQMSVFVCKLPQGHDPDSFLMQRGSSGLIALLEQSQDYLTFLISEKMSSYPKFGPREKALLVEEAIRQIKHWGSPILVYEHLKQLASLMMVPEDMVLSLANPQVTAEPQNIPIKQKVPKIHPHIVMETDILRCMLFCGSNTKILYTAQFYFVPEDFKHPECRKLFAFMISYYEKYRKNVPFDEACQVLSDSQILQLLTKRRLNTEALDTIFVQSLQKMADRRWREQCKPLSLNQNIQDKKLEILEDYVQLRKDRTIITLLDPESELIP.

The CHC2-type zinc finger occupies 37 to 61 (CPFHTEKTPSFIVNPAGAHYHCFGC). The 81-residue stretch at 253–333 (KKVILVEGQA…QMSVFVCKLP (81 aa)) folds into the Toprim domain. Residues Glu259, Asp304, and Asp306 each coordinate Mg(2+).

It belongs to the DnaG primase family. As to quaternary structure, monomer. Interacts with DnaB. The cofactor is Zn(2+). It depends on Mg(2+) as a cofactor.

It catalyses the reaction ssDNA + n NTP = ssDNA/pppN(pN)n-1 hybrid + (n-1) diphosphate.. Its function is as follows. RNA polymerase that catalyzes the synthesis of short RNA molecules used as primers for DNA polymerase during DNA replication. This Chlamydia pneumoniae (Chlamydophila pneumoniae) protein is DNA primase.